The chain runs to 154 residues: Lipoprotein signal peptidase (154 aa).

2 consecutive transmembrane segments (helical) span residues 55–75 and 85–105; these read GQFW…VIYI and AGVG…DRVF. Active-site residues include D111 and D129. Residues 127-147 traverse the membrane as a helical segment; it reads VADSALTVGVILLFVHMFFFA.

Belongs to the peptidase A8 family.

The protein resides in the cell membrane. The catalysed reaction is Release of signal peptides from bacterial membrane prolipoproteins. Hydrolyzes -Xaa-Yaa-Zaa-|-(S,diacylglyceryl)Cys-, in which Xaa is hydrophobic (preferably Leu), and Yaa (Ala or Ser) and Zaa (Gly or Ala) have small, neutral side chains.. It participates in protein modification; lipoprotein biosynthesis (signal peptide cleavage). This protein specifically catalyzes the removal of signal peptides from prolipoproteins. The chain is Lipoprotein signal peptidase from Geobacillus kaustophilus (strain HTA426).